The chain runs to 166 residues: Photosystem I assembly protein Ycf3 (166 aa).

3 TPR repeats span residues 35 to 68 (AFVY…EVDP), 72 to 105 (SFIF…NPSL), and 120 to 153 (GEQA…APLN).

The protein belongs to the Ycf3 family.

The protein resides in the plastid. It is found in the chloroplast thylakoid membrane. Its function is as follows. Essential for the assembly of the photosystem I (PSI) complex. May act as a chaperone-like factor to guide the assembly of the PSI subunits. The sequence is that of Photosystem I assembly protein Ycf3 from Ostreococcus tauri.